Reading from the N-terminus, the 653-residue chain is Epithelial sodium channel subunit gamma (653 aa).

Residues 1 to 54 are Cytoplasmic-facing; that stretch reads MGHGRRISESIKKQLPVTGPEAPTVKNLMDWYLNNTNTHGCRRIAVSRGYLRRW. A helical transmembrane segment spans residues 55-75; the sequence is IWICFTVSSVGMIFWQWTLLL. Over 76–546 the chain is Extracellular; that stretch reads MSYYTVSVSV…GGQLGLWMSC (471 aa). 8 cysteine pairs are disulfide-bonded: Cys-100/Cys-290, Cys-214/Cys-221, Cys-267/Cys-274, Cys-379/Cys-464, Cys-401/Cys-460, Cys-405/Cys-456, Cys-414/Cys-441, and Cys-416/Cys-430. A helical transmembrane segment spans residues 547-567; sequence SIVCFLEMWEVFLVDILTIIA. Residues 568-653 are Cytoplasmic-facing; it reads RYWLHRGRQW…DEQVSDTEVN (86 aa). The segment at 582 to 608 is disordered; that stretch reads KERQMQQPSPPDHDTGHHNPVCIDDED.

It belongs to the amiloride-sensitive sodium channel (TC 1.A.6) family. SCNN1G subfamily. In terms of assembly, component of the heterotrimeric epithelial sodium channel (ENaC) composed of an alpha/SCNN1A, a beta/SCNN1B and a gamma/SCNN1G subunit. Strongly expressed in gill, liver, kidney and rectum and more weakly in heart, muscle and intestine.

It localises to the apical cell membrane. It catalyses the reaction Na(+)(in) = Na(+)(out). Originally identified and characterized by its inhibition by the diuretic drug amiloride. Its function is as follows. This is one of the three pore-forming subunits of the heterotrimeric epithelial sodium channel (ENaC), a critical regulator of sodium balance and fluid homeostasis. ENaC operates in epithelial tissues, where it mediates the electrodiffusion of sodium ions from extracellular fluid through the apical membrane of cells, with water following osmotically. The sequence is that of Epithelial sodium channel subunit gamma from Neoceratodus forsteri (Australian lungfish).